Here is a 290-residue protein sequence, read N- to C-terminus: Light-independent protochlorophyllide reductase iron-sulfur ATP-binding protein (290 aa).

ATP contacts are provided by residues 10–15 and K39; that span reads GIGKST. S14 contacts Mg(2+). Residues C95 and C129 each coordinate [4Fe-4S] cluster. 180-181 contributes to the ATP binding site; sequence NR.

This sequence belongs to the NifH/BchL/ChlL family. In terms of assembly, homodimer. Protochlorophyllide reductase is composed of three subunits; ChlL, ChlN and ChlB. [4Fe-4S] cluster serves as cofactor.

The protein localises to the plastid. The protein resides in the chloroplast. It catalyses the reaction chlorophyllide a + oxidized 2[4Fe-4S]-[ferredoxin] + 2 ADP + 2 phosphate = protochlorophyllide a + reduced 2[4Fe-4S]-[ferredoxin] + 2 ATP + 2 H2O. The protein operates within porphyrin-containing compound metabolism; chlorophyll biosynthesis (light-independent). Its function is as follows. Component of the dark-operative protochlorophyllide reductase (DPOR) that uses Mg-ATP and reduced ferredoxin to reduce ring D of protochlorophyllide (Pchlide) to form chlorophyllide a (Chlide). This reaction is light-independent. The L component serves as a unique electron donor to the NB-component of the complex, and binds Mg-ATP. In Cycas taitungensis (Prince sago), this protein is Light-independent protochlorophyllide reductase iron-sulfur ATP-binding protein.